The primary structure comprises 708 residues: Elongation factor G (708 aa).

Residues 8–290 (KRYRNIGISA…AVIQYLPAPM (283 aa)) form the tr-type G domain. GTP contacts are provided by residues 17–24 (AHIDAGKT), 88–92 (DTPGH), and 142–145 (NKMD).

Belongs to the TRAFAC class translation factor GTPase superfamily. Classic translation factor GTPase family. EF-G/EF-2 subfamily.

Its subcellular location is the cytoplasm. Its function is as follows. Catalyzes the GTP-dependent ribosomal translocation step during translation elongation. During this step, the ribosome changes from the pre-translocational (PRE) to the post-translocational (POST) state as the newly formed A-site-bound peptidyl-tRNA and P-site-bound deacylated tRNA move to the P and E sites, respectively. Catalyzes the coordinated movement of the two tRNA molecules, the mRNA and conformational changes in the ribosome. This chain is Elongation factor G, found in Psychrobacter cryohalolentis (strain ATCC BAA-1226 / DSM 17306 / VKM B-2378 / K5).